A 112-amino-acid chain; its full sequence is Thioredoxin (112 aa).

Residues 2-112 (SEDSATVAVT…ALLRELSDAL (111 aa)) enclose the Thioredoxin domain. A disulfide bridge connects residues cysteine 35 and cysteine 38.

The protein belongs to the thioredoxin family.

Participates in various redox reactions through the reversible oxidation of its active center dithiol to a disulfide and catalyzes dithiol-disulfide exchange reactions. The protein is Thioredoxin (trxA) of Mycolicibacterium smegmatis (Mycobacterium smegmatis).